A 62-amino-acid polypeptide reads, in one-letter code: Photosystem II reaction center protein H (62 aa).

Residues 30 to 50 form a helical membrane-spanning segment; that stretch reads PVMAGIGFMLLIFLVTILQIY.

This sequence belongs to the PsbH family. As to quaternary structure, PSII is composed of 1 copy each of membrane proteins PsbA, PsbB, PsbC, PsbD, PsbE, PsbF, PsbH, PsbI, PsbJ, PsbK, PsbL, PsbM, PsbT, PsbX, PsbY, Psb30/Ycf12, peripheral proteins PsbO, CyanoQ (PsbQ), PsbU, PsbV and a large number of cofactors. It forms dimeric complexes.

Its subcellular location is the cellular thylakoid membrane. One of the components of the core complex of photosystem II (PSII), required for its stability and/or assembly. PSII is a light-driven water:plastoquinone oxidoreductase that uses light energy to abstract electrons from H(2)O, generating O(2) and a proton gradient subsequently used for ATP formation. It consists of a core antenna complex that captures photons, and an electron transfer chain that converts photonic excitation into a charge separation. This chain is Photosystem II reaction center protein H, found in Prochlorococcus marinus (strain MIT 9303).